The sequence spans 72 residues: Translation initiation factor IF-1 (72 aa).

An S1-like domain is found at 1 to 72; sequence MSKQSSIEQD…TKGRIVFRYK (72 aa).

Belongs to the IF-1 family. As to quaternary structure, component of the 30S ribosomal translation pre-initiation complex which assembles on the 30S ribosome in the order IF-2 and IF-3, IF-1 and N-formylmethionyl-tRNA(fMet); mRNA recruitment can occur at any time during PIC assembly.

It is found in the cytoplasm. Its function is as follows. One of the essential components for the initiation of protein synthesis. Stabilizes the binding of IF-2 and IF-3 on the 30S subunit to which N-formylmethionyl-tRNA(fMet) subsequently binds. Helps modulate mRNA selection, yielding the 30S pre-initiation complex (PIC). Upon addition of the 50S ribosomal subunit IF-1, IF-2 and IF-3 are released leaving the mature 70S translation initiation complex. In Cytophaga hutchinsonii (strain ATCC 33406 / DSM 1761 / CIP 103989 / NBRC 15051 / NCIMB 9469 / D465), this protein is Translation initiation factor IF-1.